We begin with the raw amino-acid sequence, 306 residues long: Pantothenate kinase (306 aa).

ATP is bound at residue 90–97; the sequence is GSVAVGKS.

This sequence belongs to the prokaryotic pantothenate kinase family.

It is found in the cytoplasm. It carries out the reaction (R)-pantothenate + ATP = (R)-4'-phosphopantothenate + ADP + H(+). The protein operates within cofactor biosynthesis; coenzyme A biosynthesis; CoA from (R)-pantothenate: step 1/5. This chain is Pantothenate kinase, found in Ligilactobacillus salivarius (strain UCC118) (Lactobacillus salivarius).